The primary structure comprises 92 residues: Ribonuclease P protein component 1 (92 aa).

It belongs to the eukaryotic/archaeal RNase P protein component 1 family. Consists of a catalytic RNA component and at least 4-5 protein subunits.

It localises to the cytoplasm. It carries out the reaction Endonucleolytic cleavage of RNA, removing 5'-extranucleotides from tRNA precursor.. Part of ribonuclease P, a protein complex that generates mature tRNA molecules by cleaving their 5'-ends. This is Ribonuclease P protein component 1 from Staphylothermus marinus (strain ATCC 43588 / DSM 3639 / JCM 9404 / F1).